A 428-amino-acid polypeptide reads, in one-letter code: MPNVVIIGAQWGDEGKGKIVDLLTRDTDYVVRFQGGNNAGHTVIVDGKTYILHLIPSGILHKEKICIIGNGVVLDPQIFIQELDTLLSQGIDVSPNRLKLSTKTHLIMPYHKLLDQVRENASTTQKIGTTGRGIGPCYEDKVSRIGIRTIDLTQPKLLYKKIELALKEKNTLFTQLYNTEFVNAETIFNEVMETASRILPYLSDTSSILQDAFIKNKKVIFEGAQGVHLDIDHGTYPFVTSSNTIAANASIGSGIALSSTEKIIGIVKAYTTRVGSGPFPTELYDNTGKFLQEKGHEYGATTGRPRRCGWQDLVMLKDSVRLNGFTELALTKLDVLSGLKKINICTSYAYQGESVTYPPQDEHILFNEIKPIYETMPGWEHSLESCTSWNQLPQCAKNYIERIEQVVGVPITIISVGADRNQTLFRDI.

Residues 12-18 (GDEGKGK) and 40-42 (GHT) contribute to the GTP site. The active-site Proton acceptor is the Asp13. The Mg(2+) site is built by Asp13 and Gly40. IMP is bound by residues 13–16 (DEGK), 38–41 (NAGH), Thr130, Arg144, Gln225, Thr240, and Arg304. His41 (proton donor) is an active-site residue. 300 to 306 (ATTGRPR) is a binding site for substrate. GTP is bound by residues Arg306, 332–334 (KLD), and 415–417 (SVG).

The protein belongs to the adenylosuccinate synthetase family. Homodimer. Mg(2+) serves as cofactor.

It localises to the cytoplasm. It catalyses the reaction IMP + L-aspartate + GTP = N(6)-(1,2-dicarboxyethyl)-AMP + GDP + phosphate + 2 H(+). It participates in purine metabolism; AMP biosynthesis via de novo pathway; AMP from IMP: step 1/2. Functionally, plays an important role in the de novo pathway of purine nucleotide biosynthesis. Catalyzes the first committed step in the biosynthesis of AMP from IMP. This is Adenylosuccinate synthetase from Lawsonia intracellularis (strain PHE/MN1-00).